The chain runs to 1347 residues: Protocadherin-11 X-linked (1347 aa).

A signal peptide spans 1–23 (MDLLSGTYIFAVLLACVVFHSGA). The Extracellular segment spans residues 24–812 (QEKNYTIREE…VSSPTSDYVK (789 aa)). Cadherin domains are found at residues 26 to 139 (KNYT…APLF), 140 to 249 (PATV…HPVF), 250 to 355 (KETE…VPSI), 362 to 466 (NPVN…APVF), 467 to 570 (TQSF…SPVF), 571 to 673 (THNE…KPVF), and 677 to 795 (PSNY…APVT). 3 N-linked (GlcNAc...) asparagine glycosylation sites follow: Asn27, Asn48, and Asn54. Asn344 carries an N-linked (GlcNAc...) asparagine glycan. N-linked (GlcNAc...) asparagine glycosylation occurs at Asn553. An N-linked (GlcNAc...) asparagine glycan is attached at Asn773. Residues 813-833 (ILVAAVAGTITVVVVIFITAV) form a helical membrane-spanning segment. Topologically, residues 834-1347 (VRCRQAPHLK…DSPVMEEHPL (514 aa)) are cytoplasmic. 3 disordered regions span residues 1057–1091 (LPEG…GYPQ), 1097–1116 (RATP…ESTF), and 1325–1347 (TFTP…EHPL).

The protein resides in the cell membrane. Functionally, potential calcium-dependent cell-adhesion protein. The chain is Protocadherin-11 X-linked (PCDH11X) from Pan paniscus (Pygmy chimpanzee).